Consider the following 230-residue polypeptide: Large ribosomal subunit protein uL1 (230 aa).

The protein belongs to the universal ribosomal protein uL1 family. In terms of assembly, part of the 50S ribosomal subunit.

Functionally, binds directly to 23S rRNA. The L1 stalk is quite mobile in the ribosome, and is involved in E site tRNA release. Protein L1 is also a translational repressor protein, it controls the translation of the L11 operon by binding to its mRNA. This Staphylococcus aureus (strain N315) protein is Large ribosomal subunit protein uL1.